The chain runs to 498 residues: Putative F-box/FBD/LRR-repeat protein At4g03220 (498 aa).

The F-box domain maps to 23–71 (VDRISNLPDSLNHQILLLLPLKSAAQASLLSKRWRSLFLSLPDLDFTSI). LRR repeat units follow at residues 148–172 (SQNL…SSAR), 175–200 (FQKL…FFTD), and 235–259 (SLQL…CFYS). The 51-residue stretch at 416-466 (YWESQAYELESFLNHLEFVEIHGFVECENEMSLAIFLLRHGKALIKMTLRS) folds into the FBD domain.

This is Putative F-box/FBD/LRR-repeat protein At4g03220 from Arabidopsis thaliana (Mouse-ear cress).